A 351-amino-acid chain; its full sequence is Putative [LysW]-L-2-aminoadipate/[LysW]-L-glutamate phosphate reductase (351 aa).

NADP(+)-binding positions include 9–12 (SGFV) and 33–35 (SRR). Cysteine 150 is an active-site residue. Asparagine 318 is a binding site for NADP(+).

The protein belongs to the NAGSA dehydrogenase family. Type 1 subfamily. LysY sub-subfamily.

The protein resides in the cytoplasm. The enzyme catalyses [amino-group carrier protein]-C-terminal-N-(1-carboxy-5-oxopentan-1-yl)-L-glutamine + phosphate + NADP(+) = [amino-group carrier protein]-C-terminal-N-(1-carboxy-5-phosphooxy-5-oxopentan-1-yl)-L-glutamine + NADPH + H(+). It carries out the reaction [amino-group carrier protein]-C-terminal-gamma-(L-glutamyl-5-semialdehyde)-L-glutamate + phosphate + NADP(+) = [amino-group carrier protein]-C-terminal-gamma-(5-phospho-L-glutamyl)-L-glutamate + NADPH + H(+). Its pathway is amino-acid biosynthesis; L-lysine biosynthesis via AAA pathway; L-lysine from L-alpha-aminoadipate (Thermus route): step 3/5. It participates in amino-acid biosynthesis; L-arginine biosynthesis. Involved in both the arginine and lysine biosynthetic pathways. This is Putative [LysW]-L-2-aminoadipate/[LysW]-L-glutamate phosphate reductase from Pyrobaculum aerophilum (strain ATCC 51768 / DSM 7523 / JCM 9630 / CIP 104966 / NBRC 100827 / IM2).